A 192-amino-acid polypeptide reads, in one-letter code: Probable nicotinate-nucleotide adenylyltransferase (192 aa).

The protein belongs to the NadD family.

The enzyme catalyses nicotinate beta-D-ribonucleotide + ATP + H(+) = deamido-NAD(+) + diphosphate. It participates in cofactor biosynthesis; NAD(+) biosynthesis; deamido-NAD(+) from nicotinate D-ribonucleotide: step 1/1. Catalyzes the reversible adenylation of nicotinate mononucleotide (NaMN) to nicotinic acid adenine dinucleotide (NaAD). This is Probable nicotinate-nucleotide adenylyltransferase from Rhizobium etli (strain CIAT 652).